Consider the following 459-residue polypeptide: Glycosyl hydrolase family 109 protein (459 aa).

A signal peptide (tat-type signal) is located at residues 1–31 (MHNIHRRHFLKAAGAVTAGLITANITASTHA). Residues 64 to 65 (ER), aspartate 86, 135 to 138 (WEWH), 155 to 156 (EV), and asparagine 184 each bind NAD(+). Substrate is bound by residues tyrosine 213, arginine 232, 244-247 (YPTH), and tyrosine 326. Tyrosine 244 serves as a coordination point for NAD(+).

This sequence belongs to the Gfo/Idh/MocA family. Glycosyl hydrolase 109 subfamily. NAD(+) serves as cofactor. Post-translationally, predicted to be exported by the Tat system. The position of the signal peptide cleavage has not been experimentally proven.

Its function is as follows. Glycosidase. In Shewanella sp. (strain W3-18-1), this protein is Glycosyl hydrolase family 109 protein.